The chain runs to 31 residues: Aspartate racemase (31 aa).

A disordered region spans residues 1 to 31 (PVAPEYLFKKEEDKGANKEEEEVAPELGIRA). Over residues 7 to 18 (LFKKEEDKGANK) the composition is skewed to basic and acidic residues.

The protein belongs to the aspartate/glutamate racemases family. Pyridoxal 5'-phosphate serves as cofactor.

The catalysed reaction is L-aspartate = D-aspartate. Its activity is regulated as follows. Inhibited by hydroxylamine, aminooxyacetate, phenylhydrazine and sodium borohydride. Functionally, highly specific toward aspartate and entirely inactive on glutamate, alanine and serine. The sequence is that of Aspartate racemase from Anadara broughtonii (Blood clam).